A 229-amino-acid polypeptide reads, in one-letter code: MAHAGGTGYDNREIVMKYIHYKLSQRGYEWDAGDAGAAPPGAAPAPGILSSQPGRTPAPSRTSPPPPPAAAAGPAPSPVPPVVHLTLRQAGDDFSRRYRRDFAEMSSQLHLTPFTARERFATVVEELFRDGVNWGRIVAFFEFGGVMCVESVNREMSPLVDSIALWMTEYLNRHLHTWIQDNGGWDAFVELYGPSMRPLFDFSWLSLKALLSLALVGACITLGAYLGHK.

The BH4 motif lies at 10 to 30 (DNREIVMKYIHYKLSQRGYEW). The disordered stretch occupies residues 30 to 82 (WDAGDAGAAPPGAAPAPGILSSQPGRTPAPSRTSPPPPPAAAAGPAPSPVPPV). Residues 33–61 (GDAGAAPPGAAPAPGILSSQPGRTPAPSR) show a composition bias toward low complexity. A Phosphothreonine; by MAPK8 modification is found at T62. Positions 62–81 (TSPPPPPAAAAGPAPSPVPP) are enriched in pro residues. Position 63 is a phosphoserine; by MAPK8 and PKC (S63). S77 is modified (phosphoserine; by MAPK8). The BH3 motif lies at 83–97 (VHLTLRQAGDDFSRR). A BH1 motif is present at residues 126–145 (ELFRDGVNWGRIVAFFEFGG). Residues 177–192 (TWIQDNGGWDAFVELY) carry the BH2 motif. The helical transmembrane segment at 202–223 (FSWLSLKALLSLALVGACITLG) threads the bilayer.

This sequence belongs to the Bcl-2 family. As to quaternary structure, forms homodimers, and heterodimers with BAX, BAD, BAK and Bcl-X(L). Heterodimerization with BAX requires intact BH1 and BH2 motifs, and is necessary for anti-apoptotic activity. Component of the complex, at least composed of LRPPRC, BECN1 and BCL2; the interactions prevent BECN1 from forming an autophagy-inducing complex with PIK3C3. Interacts with EI24. Also interacts with APAF1, BBC3, BCL2L1, BNIPL, MRPL41 and TP53BP2. Binding to FKBP8 seems to target BCL2 to the mitochondria and probably interferes with the binding of BCL2 to its targets. Interacts with BAG1 in an ATP-dependent manner. Interacts with RAF1 (the 'Ser-338' and 'Ser-339' phosphorylated form). Interacts (via the BH4 domain) with EGLN3; the interaction prevents the formation of the BAX-BCL2 complex and inhibits the anti-apoptotic activity of BCL2. Interacts with G0S2; this interaction also prevents the formation of the anti-apoptotic BAX-BCL2 complex. Interacts with RTL10/BOP. Interacts with the SCF(FBXO10) complex. Interacts (via the loop between motifs BH4 and BH3) with NLRP1 (via LRR repeats), but not with NLRP2, NLRP3, NLRP4, PYCARD, nor MEFV. Interacts with GIMAP3/IAN4, GIMAP4/IAN1 and GIMAP5/IAN5. Interacts with BCAP31. Interacts with IRF3; the interaction is inhibited by Sendai virus infection. Interacts with BECN1; thereby inhibiting autophagy in non-starvation conditions. Interacts with AMBRA1; thereby inhibiting autophagy. Phosphorylation/dephosphorylation on Ser-63 regulates anti-apoptotic activity. Growth factor-stimulated phosphorylation on Ser-63 by PKC is required for the anti-apoptosis activity and occurs during the G2/M phase of the cell cycle. In the absence of growth factors, BCL2 appears to be phosphorylated by other protein kinases such as ERKs and stress-activated kinases. Phosphorylated by MAPK8/JNK1 at Thr-62, Ser-63 and Ser-77, which stimulates starvation-induced autophagy. Dephosphorylated by protein phosphatase 2A (PP2A). Post-translationally, proteolytically cleaved by caspases during apoptosis. The cleaved protein, lacking the BH4 motif, has pro-apoptotic activity, causes the release of cytochrome c into the cytosol promoting further caspase activity. In terms of processing, monoubiquitinated by PRKN, leading to an increase in its stability. Ubiquitinated by SCF(FBXO10), leading to its degradation by the proteasome.

It is found in the mitochondrion outer membrane. The protein resides in the nucleus membrane. The protein localises to the endoplasmic reticulum membrane. It localises to the cytoplasm. In terms of biological role, suppresses apoptosis in a variety of cell systems including factor-dependent lymphohematopoietic and neural cells. Regulates cell death by controlling the mitochondrial membrane permeability. Appears to function in a feedback loop system with caspases. Inhibits caspase activity either by preventing the release of cytochrome c from the mitochondria and/or by binding to the apoptosis-activating factor (APAF-1). Also acts as an inhibitor of autophagy: interacts with BECN1 and AMBRA1 during non-starvation conditions and inhibits their autophagy function. May attenuate inflammation by impairing NLRP1-inflammasome activation, hence CASP1 activation and IL1B release. The polypeptide is Apoptosis regulator Bcl-2 (BCL2) (Bos taurus (Bovine)).